The sequence spans 490 residues: Sushi domain-containing protein 4 (490 aa).

Residues 1–21 form a disordered region; sequence MYHGMNPSNGDGFLEQQQQQQ. Residues 1–41 form the signal peptide; that stretch reads MYHGMNPSNGDGFLEQQQQQQQPQSPQRLLAVILWFQLALC. Over 42–319 the chain is Extracellular; that stretch reads FGPAQLTGGF…PSTHETLLTT (278 aa). 4 Sushi domains span residues 55–119, 120–179, 178–239, and 241–304; these read QVCA…ICVQ, EDCR…ICQG, QGCL…RCLA, and EVCP…YCIK. 8 cysteine pairs are disulfide-bonded: cysteine 57–cysteine 99, cysteine 85–cysteine 117, cysteine 122–cysteine 165, cysteine 147–cysteine 177, cysteine 180–cysteine 224, cysteine 210–cysteine 237, cysteine 243–cysteine 289, and cysteine 274–cysteine 302. N-linked (GlcNAc...) asparagine glycosylation is found at asparagine 104 and asparagine 134. A glycan (N-linked (GlcNAc...) asparagine) is linked at asparagine 192. A helical membrane pass occupies residues 320–340; it reads WKIVAFTATSVLLVLLLVILA. The Cytoplasmic portion of the chain corresponds to 341–490; the sequence is RMFQTKFKAH…DEIPLMEEDP (150 aa). Positions 401 to 490 are disordered; sequence GCPLPVDDQS…DEIPLMEEDP (90 aa). A compositionally biased stretch (polar residues) spans 430–456; sequence CDSVSGSSELLQSLYSPPRCQESTHPA. Residues 479–490 show a composition bias toward acidic residues; sequence IADEIPLMEEDP.

In terms of tissue distribution, isoform 3 is the predominant isoform in all tissues except cortex, cerebellum, kidney, and breast. Isoform 1 is found primarily in the esophagus and the brain.

It localises to the membrane. It is found in the secreted. Its function is as follows. Acts as a complement inhibitor by disrupting the formation of the classical C3 convertase. Isoform 3 inhibits the classical complement pathway, while membrane-bound isoform 1 inhibits deposition of C3b via both the classical and alternative complement pathways. The protein is Sushi domain-containing protein 4 (SUSD4) of Homo sapiens (Human).